We begin with the raw amino-acid sequence, 265 residues long: Phosphate import ATP-binding protein PstB (265 aa).

The 250-residue stretch at 11–260 folds into the ABC transporter domain; it reads VSADEVKIAA…PRDPRTESYI (250 aa). 50 to 57 contacts ATP; the sequence is GPSGCGKS.

The protein belongs to the ABC transporter superfamily. Phosphate importer (TC 3.A.1.7) family. As to quaternary structure, the complex is composed of two ATP-binding proteins (PstB), two transmembrane proteins (PstC and PstA) and a solute-binding protein (PstS).

It localises to the cell inner membrane. The catalysed reaction is phosphate(out) + ATP + H2O = ADP + 2 phosphate(in) + H(+). Functionally, part of the ABC transporter complex PstSACB involved in phosphate import. Responsible for energy coupling to the transport system. This chain is Phosphate import ATP-binding protein PstB, found in Cereibacter sphaeroides (strain ATCC 17023 / DSM 158 / JCM 6121 / CCUG 31486 / LMG 2827 / NBRC 12203 / NCIMB 8253 / ATH 2.4.1.) (Rhodobacter sphaeroides).